The primary structure comprises 944 residues: Protocadherin gamma-C5 (944 aa).

The N-terminal stretch at Met1 to Gly29 is a signal peptide. Cadherin domains are found at residues Gln30–Phe133, Ala134–Phe242, Gln243–Val350, Leu351–Phe454, Asn455–Val564, and Trp571–Ser677. Topologically, residues Gln30–Tyr693 are extracellular. 3 N-linked (GlcNAc...) asparagine glycosylation sites follow: Asn265, Asn443, and Asn547. A helical membrane pass occupies residues Leu694 to Ala714. The Cytoplasmic segment spans residues Lys715–Lys944. Disordered regions lie at residues Asp722–Pro747, Ser812–Asn853, and Ala914–Lys944. The span at Gln820 to Asn853 shows a compositional bias: polar residues. The segment covering Asn934–Lys944 has biased composition (basic residues).

The protein localises to the cell membrane. Potential calcium-dependent cell-adhesion protein. May be involved in the establishment and maintenance of specific neuronal connections in the brain. The chain is Protocadherin gamma-C5 (PCDHGC5) from Pan troglodytes (Chimpanzee).